The sequence spans 378 residues: Protein arginine N-methyltransferase 6 (378 aa).

The segment at Met-1–Arg-46 is disordered. The span at Asp-13–Glu-22 shows a compositional bias: gly residues. Arg-38 carries the post-translational modification Asymmetric dimethylarginine; by autocatalysis. An SAM-dependent MTase PRMT-type domain is found at Asp-47–Glu-377. His-60, Arg-69, Gly-93, Glu-115, and Glu-144 together coordinate S-adenosyl-L-methionine. Active-site residues include Glu-158 and Glu-167.

Belongs to the class I-like SAM-binding methyltransferase superfamily. Protein arginine N-methyltransferase family. PRMT6 subfamily. In terms of assembly, interacts with (and methylates) HIV-1 Tat, Rev and Nucleocapsid protein p7 (NC). Interacts with EPB41L3 and NCOA1. Automethylation enhances its stability.

The protein resides in the nucleus. The catalysed reaction is L-arginyl-[protein] + 2 S-adenosyl-L-methionine = N(omega),N(omega)-dimethyl-L-arginyl-[protein] + 2 S-adenosyl-L-homocysteine + 2 H(+). Its function is as follows. Arginine methyltransferase that can catalyze the formation of both omega-N monomethylarginine (MMA) and asymmetrical dimethylarginine (aDMA), with a strong preference for the formation of aDMA. Preferentially methylates arginyl residues present in a glycine and arginine-rich domain and displays preference for monomethylated substrates. Specifically mediates the asymmetric dimethylation of histone H3 'Arg-2' to form H3R2me2a. H3R2me2a represents a specific tag for epigenetic transcriptional repression and is mutually exclusive with methylation on histone H3 'Lys-4' (H3K4me2 and H3K4me3). Acts as a transcriptional repressor of various genes such as HOXA2, THBS1 and TP53. Repression of TP53 blocks cellular senescence. Also methylates histone H2A and H4 'Arg-3' (H2AR3me and H4R3me, respectively). Acts as a regulator of DNA base excision during DNA repair by mediating the methylation of DNA polymerase beta (POLB), leading to the stimulation of its polymerase activity by enhancing DNA binding and processivity. Methylates HMGA1. Regulates alternative splicing events. Acts as a transcriptional coactivator of a number of steroid hormone receptors including ESR1, ESR2, PGR and NR3C1. Promotes fasting-induced transcriptional activation of the gluconeogenic program through methylation of the CRTC2 transcription coactivator. Methylates GPS2, protecting GPS2 from ubiquitination and degradation. Methylates SIRT7, inhibiting SIRT7 histone deacetylase activity and promoting mitochondria biogenesis. This is Protein arginine N-methyltransferase 6 (Prmt6) from Mus musculus (Mouse).